Here is a 615-residue protein sequence, read N- to C-terminus: Leucine aminopeptidase 2-1 (615 aa).

Substrate-binding positions include 137–139 and 261–266; these read QCQ and PYGGME. Histidine 290 is a Zn(2+) binding site. The Proton acceptor role is filled by glutamate 291. The Zn(2+) site is built by histidine 294 and glutamate 313. Tyrosine 380 serves as the catalytic Proton donor.

The protein belongs to the peptidase M1 family. Requires Zn(2+) as cofactor.

It localises to the cytoplasm. The protein resides in the nucleus. It catalyses the reaction an epoxide + H2O = an ethanediol. Its function is as follows. Aminopeptidase that preferentially cleaves di- and tripeptides. Also has low epoxide hydrolase activity (in vitro). Can hydrolyze the epoxide leukotriene LTA(4) but it forms preferentially 5,6-dihydroxy-7,9,11,14-eicosatetraenoic acid rather than the cytokine leukotriene B(4) as the product compared to the homologous mammalian enzyme (in vitro). The sequence is that of Leucine aminopeptidase 2-1 from Meyerozyma guilliermondii (strain ATCC 6260 / CBS 566 / DSM 6381 / JCM 1539 / NBRC 10279 / NRRL Y-324) (Yeast).